We begin with the raw amino-acid sequence, 300 residues long: B1 kinase (300 aa).

Positions 16-282 (WVVGPLIGKG…ITMVNSLTYF (267 aa)) constitute a Protein kinase domain. ATP-binding positions include 22–30 (IGKGGFGSI) and Lys45. Asp147 serves as the catalytic Proton acceptor.

This sequence belongs to the protein kinase superfamily. Ser/Thr protein kinase family. Poxviruses subfamily. In terms of assembly, interacts with host JIP1; this interaction increases the amount of MAPK bound to JIP1 and subsequently increases the activity of transcription factors, such as JUN, that respond to these complexes. Interacts with protein OPG198; this interaction inhibits the repressive activity of OPG198 pseudokinase on viral replication factory formation. Mg(2+) serves as cofactor. Post-translationally, autophosphorylated.

The protein resides in the virion. The protein localises to the host cytoplasm. It catalyses the reaction L-seryl-[protein] + ATP = O-phospho-L-seryl-[protein] + ADP + H(+). It carries out the reaction L-threonyl-[protein] + ATP = O-phospho-L-threonyl-[protein] + ADP + H(+). In terms of biological role, essential serine/threonine-protein kinase that plays different role in the viral life cycle. Phosphorylates the host small ribosomal protein RACK1 thereby customizing the ribosomes to a state optimal for viral mRNAs (which contain poly-A leaders) but not for host mRNAs. Facilitates viral DNA replication by inhibiting host BANF1, a cellular host defense responsive to foreign DNA. Phosphorylates host BANF1 on serine and threonine residues; this leads to BANF1 relocalization to the cytoplasm, loss of dimerization and impaired DNA binding activity. Indeed, BANF1 activity depends on its DNA-binding property which is blocked by VPK1-mediated phosphorylation. Required for viral intermediate genes expression, probably by inhibiting host BANF1. Modulates cellular responses via host JUN by two different mechanisms, either by direct phosphorylation or by modulation of upstream JIP1-MAPK complexes. Seems to participate in the accumulation/processing of late proteins and thus in virion maturation. In addition, inhibits B12 repressive activity on viral DNA replication via a phosphorylation-dependent mechanism. In Homo sapiens (Human), this protein is B1 kinase (OPG187).